A 327-amino-acid polypeptide reads, in one-letter code: GMP reductase (327 aa).

The active-site Thioimidate intermediate is the Cys-176. Position 205–228 (Ile-205–Val-228) interacts with NADP(+).

It belongs to the IMPDH/GMPR family. GuaC type 2 subfamily.

It catalyses the reaction IMP + NH4(+) + NADP(+) = GMP + NADPH + 2 H(+). Functionally, catalyzes the irreversible NADPH-dependent deamination of GMP to IMP. It functions in the conversion of nucleobase, nucleoside and nucleotide derivatives of G to A nucleotides, and in maintaining the intracellular balance of A and G nucleotides. The chain is GMP reductase from Streptococcus pyogenes serotype M3 (strain ATCC BAA-595 / MGAS315).